The chain runs to 359 residues: 4-hydroxy-3-methylbut-2-en-1-yl diphosphate synthase (flavodoxin) (359 aa).

Residues Cys264, Cys267, Cys299, and Glu306 each coordinate [4Fe-4S] cluster.

This sequence belongs to the IspG family. [4Fe-4S] cluster is required as a cofactor.

The enzyme catalyses (2E)-4-hydroxy-3-methylbut-2-enyl diphosphate + oxidized [flavodoxin] + H2O + 2 H(+) = 2-C-methyl-D-erythritol 2,4-cyclic diphosphate + reduced [flavodoxin]. The protein operates within isoprenoid biosynthesis; isopentenyl diphosphate biosynthesis via DXP pathway; isopentenyl diphosphate from 1-deoxy-D-xylulose 5-phosphate: step 5/6. Functionally, converts 2C-methyl-D-erythritol 2,4-cyclodiphosphate (ME-2,4cPP) into 1-hydroxy-2-methyl-2-(E)-butenyl 4-diphosphate. In Helicobacter pylori (strain Shi470), this protein is 4-hydroxy-3-methylbut-2-en-1-yl diphosphate synthase (flavodoxin).